Reading from the N-terminus, the 263-residue chain is Small ribosomal subunit protein eS4 (263 aa).

The S4 RNA-binding domain maps to 42–104 (LPLIIFLRNR…TGEHFRLVYD (63 aa)).

This sequence belongs to the eukaryotic ribosomal protein eS4 family.

This is Small ribosomal subunit protein eS4 (RPS4) from Gallus gallus (Chicken).